Here is an 81-residue protein sequence, read N- to C-terminus: ATP synthase subunit c, chloroplastic (81 aa).

The next 2 helical transmembrane spans lie at 3–23 (PLISAASVIAAGLAVGLASIG) and 57–77 (LAFMEALTIYGLVVALALLFA).

Belongs to the ATPase C chain family. As to quaternary structure, F-type ATPases have 2 components, F(1) - the catalytic core - and F(0) - the membrane proton channel. F(1) has five subunits: alpha(3), beta(3), gamma(1), delta(1), epsilon(1). F(0) has four main subunits: a(1), b(1), b'(1) and c(10-14). The alpha and beta chains form an alternating ring which encloses part of the gamma chain. F(1) is attached to F(0) by a central stalk formed by the gamma and epsilon chains, while a peripheral stalk is formed by the delta, b and b' chains.

Its subcellular location is the plastid. It is found in the chloroplast thylakoid membrane. Its function is as follows. F(1)F(0) ATP synthase produces ATP from ADP in the presence of a proton or sodium gradient. F-type ATPases consist of two structural domains, F(1) containing the extramembraneous catalytic core and F(0) containing the membrane proton channel, linked together by a central stalk and a peripheral stalk. During catalysis, ATP synthesis in the catalytic domain of F(1) is coupled via a rotary mechanism of the central stalk subunits to proton translocation. Functionally, key component of the F(0) channel; it plays a direct role in translocation across the membrane. A homomeric c-ring of between 10-14 subunits forms the central stalk rotor element with the F(1) delta and epsilon subunits. The chain is ATP synthase subunit c, chloroplastic from Ipomoea purpurea (Common morning glory).